Here is a 464-residue protein sequence, read N- to C-terminus: Glutamate--tRNA ligase (464 aa).

Residues 9–19 (PSPTGYLHIGG) carry the 'HIGH' region motif. Positions 242 to 246 (KISKR) match the 'KMSKS' region motif. Lys-245 is a binding site for ATP.

Belongs to the class-I aminoacyl-tRNA synthetase family. Glutamate--tRNA ligase type 1 subfamily. In terms of assembly, monomer.

The protein localises to the cytoplasm. The catalysed reaction is tRNA(Glu) + L-glutamate + ATP = L-glutamyl-tRNA(Glu) + AMP + diphosphate. Its function is as follows. Catalyzes the attachment of glutamate to tRNA(Glu) in a two-step reaction: glutamate is first activated by ATP to form Glu-AMP and then transferred to the acceptor end of tRNA(Glu). This Neisseria gonorrhoeae (strain NCCP11945) protein is Glutamate--tRNA ligase.